Reading from the N-terminus, the 170-residue chain is Adenine phosphoribosyltransferase (170 aa).

Belongs to the purine/pyrimidine phosphoribosyltransferase family. As to quaternary structure, homodimer.

The protein localises to the cytoplasm. It catalyses the reaction AMP + diphosphate = 5-phospho-alpha-D-ribose 1-diphosphate + adenine. It functions in the pathway purine metabolism; AMP biosynthesis via salvage pathway; AMP from adenine: step 1/1. Catalyzes a salvage reaction resulting in the formation of AMP, that is energically less costly than de novo synthesis. The polypeptide is Adenine phosphoribosyltransferase (Brachyspira hyodysenteriae (strain ATCC 49526 / WA1)).